Consider the following 363-residue polypeptide: Zinc phosphodiesterase ELAC protein 1 (363 aa).

Residues His-62, His-64, Asp-66, His-67, His-182, Asp-253, and His-313 each contribute to the Zn(2+) site. The Proton acceptor role is filled by Asp-66.

Belongs to the RNase Z family. In terms of assembly, homodimer. Requires Zn(2+) as cofactor. In terms of tissue distribution, widely expressed. Expressed in heart, brain, placenta, lung, liver, skeletal muscle, kidney and pancreas.

It is found in the cytoplasm. The protein resides in the cytosol. It localises to the nucleus. The enzyme catalyses Endonucleolytic cleavage of RNA, removing extra 3' nucleotides from tRNA precursor, generating 3' termini of tRNAs. A 3'-hydroxy group is left at the tRNA terminus and a 5'-phosphoryl group is left at the trailer molecule.. In terms of biological role, zinc phosphodiesterase, which displays some tRNA 3'-processing endonuclease activity. Specifically involved in tRNA repair: acts downstream of the ribosome-associated quality control (RQC) pathway by removing a 2',3'-cyclic phosphate from tRNAs following cleavage by ANKZF1. tRNAs are then processed by TRNT1. This chain is Zinc phosphodiesterase ELAC protein 1, found in Homo sapiens (Human).